The sequence spans 1134 residues: Vinculin (1134 aa).

Residues 1-835 are N-terminal globular head; that stretch reads MPVFHTRTIE…GAVAKVREAF (835 aa). The residue at position 97 (serine 97) is a Phosphoserine. Positions 168–208 are talin-interaction; the sequence is MTKMAKMIDERQQELTHQEHRVMLVNSMNTVKELLPVLISA. Lysine 173 is subject to N6-acetyllysine. 3 consecutive repeat copies span residues 259 to 369, 370 to 479, and 480 to 589. The segment at 259-589 is 3 X 112 AA tandem repeats; the sequence is ASKDTEAMKR…LKDLKARMQE (331 aa). Residues serine 260, serine 272, serine 275, serine 288, serine 290, serine 346, and serine 434 each carry the phosphoserine modification. Position 496 is an N6-acetyllysine (lysine 496). The residue at position 537 (tyrosine 537) is a Phosphotyrosine. Phosphoserine occurs at positions 574, 579, and 600. A phosphothreonine mark is found at threonine 604 and threonine 672. Phosphoserine is present on serine 721. Positions 741-764 are interaction with ACTN4; it reads MANIQPQMLVAGATSIARRANRIL. Serine 795 and serine 809 each carry phosphoserine. Tyrosine 822 is modified (phosphotyrosine). The tract at residues 836–878 is linker (Pro-rich); the sequence is QPQEPDFPPPPPDLEQLRLTDELAPPKPPLPEGEVPPPRPPPP. The disordered stretch occupies residues 857–887; sequence ELAPPKPPLPEGEVPPPRPPPPEEKDEEFPE. The segment covering 860 to 876 has biased composition (pro residues); the sequence is PPKPPLPEGEVPPPRPP. Residues 879 to 1134 form a C-terminal tail region; the sequence is EEKDEEFPEQ…RWVRKTPWYQ (256 aa). Facilitates phospholipid membrane insertion regions lie at residues 1003-1046 and 1120-1134; these read RLVR…KRIR and AGFT…PWYQ. Residue tyrosine 1133 is modified to Phosphotyrosine; by SRC-type Tyr-kinases.

Belongs to the vinculin/alpha-catenin family. As to quaternary structure, exhibits self-association properties. Part of a complex composed of THSD1, PTK2/FAK1, TLN1 and VCL. Interacts with APBB1IP and NRAP. Interacts with TLN1. Interacts with CTNNB1 and this interaction is necessary for its localization to the cell-cell junctions and for its function in regulating cell surface expression of E-cadherin. Interacts with SYNM. Interacts with SORBS1. Interacts with CTNNA1. Binds to ACTN4; this interaction triggers conformational changes. Interacts with FLII. In terms of assembly, (Microbial infection) Interacts via its globular head domain with the central portion of S.flexneri IcsA (also called VirG). Phosphorylated; on serines, threonines and tyrosines. Phosphorylation on Tyr-1133 in activated platelets affects head-tail interactions and cell spreading but has no effect on actin binding nor on localization to focal adhesion plaques. Post-translationally, acetylated; mainly by myristic acid but also by a small amount of palmitic acid. As to expression, metavinculin is muscle-specific.

It is found in the cell membrane. The protein localises to the cell junction. It localises to the adherens junction. The protein resides in the focal adhesion. Its subcellular location is the cytoplasm. It is found in the cytoskeleton. The protein localises to the sarcolemma. It localises to the cell projection. The protein resides in the podosome. Actin filament (F-actin)-binding protein involved in cell-matrix adhesion and cell-cell adhesion. Regulates cell-surface E-cadherin expression and potentiates mechanosensing by the E-cadherin complex. May also play important roles in cell morphology and locomotion. In Homo sapiens (Human), this protein is Vinculin (VCL).